The chain runs to 315 residues: COMPASS component SWD3 (315 aa).

WD repeat units lie at residues 53–93 (SHAR…HTFI), 94–133 (GHTA…LMKT), 136–178 (AHSE…KTLT), 187–228 (NGVV…RTFQ), 238–278 (HHSC…LLQL), and 285–315 (HHSS…WRWV).

As to quaternary structure, component of the Set1C/COMPASS complex which consists of SET1(2), BRE2(2), SPP1(2), SDC1(1), SHG1(1), SWD1(1), SWD2(1), and SWD3(1).

It localises to the nucleus. The protein resides in the chromosome. Its subcellular location is the telomere. In terms of biological role, the COMPASS (Set1C) complex specifically mono-, di- and trimethylates histone H3 to form H3K4me1/2/3, which subsequently plays a role in telomere length maintenance and transcription elongation regulation. COMPASS recognizes ubiquitinated H2B on one face of the nucleosome which stimulates the methylation of H3 on the opposing face. SWD3/CPS30 establishes COMPASS trimethylation activity and may also serve as the anchor point to properly tether and space the other subunits. In Saccharomyces cerevisiae (strain ATCC 204508 / S288c) (Baker's yeast), this protein is COMPASS component SWD3.